Consider the following 263-residue polypeptide: UPF0758 protein Pden_2304 (263 aa).

The MPN domain maps to Val-141–Leu-263. Positions 212, 214, and 225 each coordinate Zn(2+). A JAMM motif motif is present at residues His-212–Asp-225.

It belongs to the UPF0758 family.

This chain is UPF0758 protein Pden_2304, found in Paracoccus denitrificans (strain Pd 1222).